The chain runs to 320 residues: METQFLVSGRNSNIHCRIDSISSSSLTPKSSPVSTSTPTLVVFPPFKLVSKSLRTRSKPRLTVCFVLEEKELRGKLVVASDDDDGAGEVRKQREKEISASAEKLAQKLARKKSERFTYLVAAVMSSFGITSMAVLSVYYRFSWQMEGGEIPLSEMFGTFALSVGAAVGMEFWARWAHEALWHASLWHMHESHHKPREGPFELNDIFAIINAVPAIALLSYGFFHKGLIPGLCFGAGLGITVFGMAYMFVHDGLVHKRFPVGPIADVPYFRRVAAAHTLHHSDKFNGVPYGLFLGPKELEEVGGLQVLEMEINRRTKNNQS.

Residues 1 to 78 (METQFLVSGR…EKELRGKLVV (78 aa)) constitute a chloroplast transit peptide. A run of 2 helical transmembrane segments spans residues 118-138 (YLVA…LSVY) and 152-172 (LSEM…MEFW). The region spanning 165–292 (AAVGMEFWAR…KFNGVPYGLF (128 aa)) is the Fatty acid hydroxylase domain. Residues 177–182 (HEALWH) carry the Histidine box-1 motif. The Histidine box-2 motif lies at 189-193 (HESHH). 2 helical membrane passes run 204-224 (DIFA…GFFH) and 228-248 (IPGL…AYMF). The short motif at 250–255 (HDGLVH) is the Histidine box-3 element. Residues 276–280 (HTLHH) carry the Histidine box-4 motif.

The protein belongs to the sterol desaturase family.

The protein resides in the plastid. It localises to the chloroplast membrane. The catalysed reaction is all-trans-beta-carotene + 4 reduced [2Fe-2S]-[ferredoxin] + 2 O2 + 4 H(+) = all-trans-zeaxanthin + 4 oxidized [2Fe-2S]-[ferredoxin] + 2 H2O. Functionally, nonheme diiron monooxygenase involved in the biosynthesis of xanthophylls. Specific for beta-ring hydroxylations of beta-carotene. Uses ferredoxin as an electron donor. The polypeptide is Beta-carotene 3-hydroxylase, chloroplastic (BHY) (Gentiana lutea (Yellow gentian)).